A 112-amino-acid polypeptide reads, in one-letter code: Protein BEX5 (112 aa).

Basic and acidic residues-rich tracts occupy residues 1–12 and 30–51; these read MEKDPKERREEE and PKPRENVRGDWDPPAQDFREDM. Residues 1 to 56 form a disordered region; that stretch reads MEKDPKERREEEQAPVQNEEACPMGGGEGPKPRENVRGDWDPPAQDFREDMPNGLV. Residues 101 to 105 are his cluster; sequence HHDHH. A Zn(2+)-binding site is contributed by Cys109.

This sequence belongs to the BEX family. Post-translationally, ubiquitinated. Degraded by the proteasome.

The protein resides in the cytoplasm. This is Protein BEX5 (BEX5) from Bos taurus (Bovine).